The chain runs to 847 residues: B-cell receptor CD22 (847 aa).

Positions 1–19 (MHLLGPWLLLLVLEYLAFS) are cleaved as a signal peptide. The 119-residue stretch at 20–138 (DSSKWAFEHP…MERIHLNVSE (119 aa)) folds into the Ig-like V-type domain. The Extracellular portion of the chain corresponds to 20 to 687 (DSSKWAFEHP…YYSPETIGRR (668 aa)). Asn-67, Asn-101, and Asn-112 each carry an N-linked (GlcNAc...) asparagine glycan. Arg-120 contributes to the N-acetylneuraminate binding site. Asn-135, Asn-164, and Asn-231 each carry an N-linked (GlcNAc...) asparagine glycan. 6 consecutive Ig-like C2-type domains span residues 143 to 235 (PHIQ…DTVQ), 242 to 326 (PKLE…VFLQ), 331 to 416 (PEPS…LDVQ), 419 to 500 (PKKV…VALN), 505 to 582 (PRDV…QTAS), and 593 to 676 (PRRL…STLT). Cys-161 and Cys-219 are joined by a disulfide. Cystine bridges form between Cys-265–Cys-309 and Cys-353–Cys-396. 5 N-linked (GlcNAc...) asparagine glycosylation sites follow: Asn-363, Asn-428, Asn-445, Asn-448, and Asn-479. 2 disulfides stabilise this stretch: Cys-442–Cys-484 and Cys-529–Cys-571. Residues Asn-574 and Asn-634 are each glycosylated (N-linked (GlcNAc...) asparagine). An intrachain disulfide couples Cys-616 to Cys-659. The chain crosses the membrane as a helical span at residues 688–708 (VAVGFGSCLAILILAICGLKL). The Cytoplasmic segment spans residues 709–847 (QRRWKRTQSQ…ENVDYVILKH (139 aa)). Ser-725, Ser-726, and Ser-729 each carry phosphoserine. Short sequence motifs (ITIM motif) lie at residues 760-765 (ISYTTL) and 794-799 (VTYSVL). Position 762 is a phosphotyrosine (Tyr-762). A phosphotyrosine mark is found at Tyr-807, Tyr-822, and Tyr-842. 2 consecutive short sequence motifs (ITIM motif) follow at residues 820 to 825 (IHYSEL) and 840 to 845 (VDYVIL).

It belongs to the immunoglobulin superfamily. SIGLEC (sialic acid binding Ig-like lectin) family. In terms of assembly, predominantly monomer of isoform CD22-beta. Also found as heterodimer of isoform CD22-beta and a shorter isoform. Interacts with PTPN6/SHP-1, LYN, SYK, PIK3R1/PIK3R2 and PLCG1 upon phosphorylation. Interacts with GRB2, INPP5D and SHC1 upon phosphorylation. May form a complex with INPP5D/SHIP, GRB2 and SHC1. Post-translationally, phosphorylation of Tyr-762, Tyr-807 and Tyr-822 are involved in binding to SYK, GRB2 and SYK, respectively. Phosphorylation of Tyr-842 is involved in binding to SYK, PLCG2 and PIK3R1/PIK3R2. Phosphorylated on tyrosine residues by LYN.

The protein localises to the cell membrane. In terms of biological role, most highly expressed siglec (sialic acid-binding immunoglobulin-like lectin) on B-cells that plays a role in various aspects of B-cell biology including differentiation, antigen presentation, and trafficking to bone marrow. Binds to alpha 2,6-linked sialic acid residues of surface molecules such as CD22 itself, CD45 and IgM in a cis configuration. Can also bind to ligands on other cells as an adhesion molecule in a trans configuration. Acts as an inhibitory coreceptor on the surface of B-cells and inhibits B-cell receptor induced signaling, characterized by inhibition of the calcium mobilization and cellular activation. Mechanistically, the immunoreceptor tyrosine-based inhibitory motif domain is phosphorylated by the Src kinase LYN, which in turn leads to the recruitment of the protein tyrosine phosphatase 1/PTPN6, leading to the negative regulation of BCR signaling. If this negative signaling from is of sufficient strength, apoptosis of the B-cell can be induced. This chain is B-cell receptor CD22, found in Pan troglodytes (Chimpanzee).